A 510-amino-acid chain; its full sequence is Internal alternative NAD(P)H-ubiquinone oxidoreductase A1, mitochondrial (510 aa).

The N-terminal 48 residues, 1–48 (MLWIKNLARISQTTSSSVGNVFRNPESYTLSSRFCTALQKQQVTDTVQ), are a transit peptide targeting the mitochondrion. An FAD-binding site is contributed by 75–105 (RVLVLGSGWAGCRVLKGIDTSIYDVVCVSPR). NAD(+) is bound at residue 242–278 (LHCVVVGGGPTGVEFSGELSDFIMKDVRQRYSHVKDD). The short motif at 501–510 (FVFGRDISRI) is the Microbody targeting signal element.

Belongs to the NADH dehydrogenase family. It depends on FAD as a cofactor. In terms of tissue distribution, expressed in seedlings, cotyledons, young leaves, stems and flowers and, to a lower extent, in roots and buds.

It is found in the mitochondrion inner membrane. The protein localises to the peroxisome. The enzyme catalyses a quinone + NADH + H(+) = a quinol + NAD(+). It carries out the reaction a ubiquinone + NADH + H(+) = a ubiquinol + NAD(+). Functionally, alternative NADH-ubiquinone oxidoreductase which catalyzes the oxidation of mitochondrial NADH does not translocate protons across the inner mitochondrial membrane. The polypeptide is Internal alternative NAD(P)H-ubiquinone oxidoreductase A1, mitochondrial (NDA1) (Arabidopsis thaliana (Mouse-ear cress)).